We begin with the raw amino-acid sequence, 404 residues long: Cysteine desulfurase IscS (404 aa).

Residues 75 to 76 (AT), Asn-155, Gln-183, and 203 to 205 (SAH) each bind pyridoxal 5'-phosphate. Lys-206 is subject to N6-(pyridoxal phosphate)lysine. Thr-243 is a pyridoxal 5'-phosphate binding site. The active-site Cysteine persulfide intermediate is Cys-328. Cys-328 lines the [2Fe-2S] cluster pocket.

It belongs to the class-V pyridoxal-phosphate-dependent aminotransferase family. NifS/IscS subfamily. In terms of assembly, homodimer. Forms a heterotetramer with IscU, interacts with other sulfur acceptors. It depends on pyridoxal 5'-phosphate as a cofactor.

Its subcellular location is the cytoplasm. The catalysed reaction is (sulfur carrier)-H + L-cysteine = (sulfur carrier)-SH + L-alanine. The protein operates within cofactor biosynthesis; iron-sulfur cluster biosynthesis. Master enzyme that delivers sulfur to a number of partners involved in Fe-S cluster assembly, tRNA modification or cofactor biosynthesis. Catalyzes the removal of elemental sulfur atoms from cysteine to produce alanine. Functions as a sulfur delivery protein for Fe-S cluster synthesis onto IscU, an Fe-S scaffold assembly protein, as well as other S acceptor proteins. The sequence is that of Cysteine desulfurase IscS from Neisseria gonorrhoeae (strain ATCC 700825 / FA 1090).